The sequence spans 236 residues: Exosome complex component Rrp4 (236 aa).

An S1 motif domain is found at 64 to 133 (GDKVIGKVIE…EIKESWLTLK (70 aa)). One can recognise a KH domain in the interval 141–199 (EGGHMVLIHASRVPRVIGKGGGMVNMVKELTATRIIIGQNGLIWIDGPIEGVTMAIAAI).

Belongs to the RRP4 family. Component of the archaeal exosome complex. Forms a trimer of Rrp4 and/or Csl4 subunits. The trimer associates with a hexameric ring-like arrangement composed of 3 Rrp41-Rrp42 heterodimers.

The protein localises to the cytoplasm. Functionally, non-catalytic component of the exosome, which is a complex involved in RNA degradation. Increases the RNA binding and the efficiency of RNA degradation. Confers strong poly(A) specificity to the exosome. The polypeptide is Exosome complex component Rrp4 (Thermoplasma acidophilum (strain ATCC 25905 / DSM 1728 / JCM 9062 / NBRC 15155 / AMRC-C165)).